We begin with the raw amino-acid sequence, 71 residues long: Sec-independent protein translocase protein TatA (71 aa).

The chain crosses the membrane as a helical span at residues 1-21 (MGSFSLLHWLVVLVIVLLVFG). The interval 43–71 (LHEDDKPTDQLGSTSQSTASGPQQDHGKH) is disordered. Positions 52–65 (QLGSTSQSTASGPQ) are enriched in polar residues.

Belongs to the TatA/E family. As to quaternary structure, the Tat system comprises two distinct complexes: a TatABC complex, containing multiple copies of TatA, TatB and TatC subunits, and a separate TatA complex, containing only TatA subunits. Substrates initially bind to the TatABC complex, which probably triggers association of the separate TatA complex to form the active translocon.

Its subcellular location is the cell inner membrane. Its function is as follows. Part of the twin-arginine translocation (Tat) system that transports large folded proteins containing a characteristic twin-arginine motif in their signal peptide across membranes. TatA could form the protein-conducting channel of the Tat system. The protein is Sec-independent protein translocase protein TatA of Xylella fastidiosa (strain M12).